A 226-amino-acid polypeptide reads, in one-letter code: Adenylate kinase (226 aa).

Position 11–16 (11–16 (GSGKGT)) interacts with ATP. The tract at residues 31–64 (SAGEILKHALSVTKFHFNFNTDNMLNQINSGNLV) is NMP. Residues 62–64 (NLV), 90–93 (GFPR), and Q97 each bind AMP. Positions 127 to 164 (GRQVHIKSGRTYHIKFNPPKLDGIDDITGEKLVIRADD) are LID. Residues R128 and 137 to 138 (TY) each bind ATP. The AMP site is built by R161 and R172. Residue Q205 coordinates ATP.

It belongs to the adenylate kinase family. As to quaternary structure, monomer.

Its subcellular location is the cytoplasm. The catalysed reaction is AMP + ATP = 2 ADP. Its pathway is purine metabolism; AMP biosynthesis via salvage pathway; AMP from ADP: step 1/1. Functionally, catalyzes the reversible transfer of the terminal phosphate group between ATP and AMP. Plays an important role in cellular energy homeostasis and in adenine nucleotide metabolism. In Blochmanniella floridana, this protein is Adenylate kinase.